The following is a 477-amino-acid chain: Interferon gamma receptor 1 (477 aa).

Positions 1 to 25 (MGPQAAAGRMILLVVLMLSAKVGSG) are cleaved as a signal peptide. Residues 26–254 (ALTSTEDPEP…PPFHDDRKDS (229 aa)) lie on the Extracellular side of the membrane. Residues N61 and N85 are each glycosylated (N-linked (GlcNAc...) asparagine). Disulfide bonds link C83–C91, C128–C174, C203–C208, and C222–C243. The chain crosses the membrane as a helical span at residues 255–275 (IWILVVAPLTVFTVVILVFAY). Residues 276-477 (WYTKKNSFKR…RLTGEAQELS (202 aa)) are Cytoplasmic-facing. Disordered regions lie at residues 335-386 (TVTA…LSSN) and 402-446 (SDSG…SGYD). S362 is modified (phosphoserine). Phosphothreonine is present on T367. S370 is subject to Phosphoserine. Phosphothreonine occurs at positions 373 and 375. Residues 375–386 (TQRRSFSLLSSN) show a composition bias toward polar residues. Phosphoserine is present on residues S379 and S402. Residues 402 to 416 (SDSGLVGSGSSISDL) show a composition bias toward low complexity. Phosphotyrosine is present on Y445.

This sequence belongs to the type II cytokine receptor family. As to quaternary structure, monomer. Heterodimer with IFNGR2, to form the IFNG receptor complex. Interacts with JAK1. Interacts (when phosphorylated) with STAT1. Interacts with SOCS1. In terms of processing, phosphorylated at Ser/Thr residues. Phosphorylation of Tyr-445 is required for IFNG receptor signal transduction. Influenza virus infection leads to phosphorylation in a CSNK1A1-dependent manner. Ubiquitinated after phosphorylation in a CSNK1A1-dependent manner, leading to the lysosome-dependent degradation. Proteasomally degraded through 'Lys-48'-mediated ubiquitination. Ubiquitination is necessary for efficient IFNGR1 signaling.

It is found in the cell membrane. Receptor subunit for interferon gamma/INFG that plays crucial roles in antimicrobial, antiviral, and antitumor responses by activating effector immune cells and enhancing antigen presentation (, PubMed:20926559, PubMed:27286456). Associates with transmembrane accessory factor IFNGR2 to form a functional receptor. Upon ligand binding, the intracellular domain of IFNGR1 opens out to allow association of downstream signaling components JAK1 and JAK2. In turn, activated JAK1 phosphorylates IFNGR1 to form a docking site for STAT1. Subsequent phosphorylation of STAT1 leads to its dimerization, translocation to the nucleus, and stimulation of target gene transcription. STAT3 can also be activated in a similar manner although activation seems weaker. IFNGR1 intracellular domain phosphorylation also provides a docking site for SOCS1 that regulates the JAK-STAT pathway by competing with STAT1 binding to IFNGR1. This is Interferon gamma receptor 1 from Mus musculus (Mouse).